Consider the following 201-residue polypeptide: Testis-expressed protein 38 (201 aa).

A helical membrane pass occupies residues 3-23 (ISLCIGFLGLCSVLIGSCILF).

It localises to the membrane. The chain is Testis-expressed protein 38 (Tex38) from Mus musculus (Mouse).